The sequence spans 123 residues: MSWIEPIISHFCQDLGVPTSSPLSPLIQLEMAQSGTLQLEQHGATLTLWLARSLAWHRCEDAMVKALTLTAAQKSGALPLRAGWLGESQLVLFVSLDERSLTLPLLHQAFEQLLRLQQEVLAP.

Interacts with YscB to form a complex which specifically binds to YopN.

Its subcellular location is the cytoplasm. The protein localises to the cell inner membrane. Functions as a specific chaperone for YopN. It could facilitate the secretion and the subsequent translocation of YopN. The polypeptide is Chaperone protein SycN (sycN) (Yersinia pseudotuberculosis serotype I (strain IP32953)).